Consider the following 255-residue polypeptide: Tryptophan synthase alpha chain (255 aa).

Catalysis depends on proton acceptor residues E51 and D62.

The protein belongs to the TrpA family. In terms of assembly, tetramer of two alpha and two beta chains.

It carries out the reaction (1S,2R)-1-C-(indol-3-yl)glycerol 3-phosphate + L-serine = D-glyceraldehyde 3-phosphate + L-tryptophan + H2O. It participates in amino-acid biosynthesis; L-tryptophan biosynthesis; L-tryptophan from chorismate: step 5/5. In terms of biological role, the alpha subunit is responsible for the aldol cleavage of indoleglycerol phosphate to indole and glyceraldehyde 3-phosphate. In Maridesulfovibrio salexigens (strain ATCC 14822 / DSM 2638 / NCIMB 8403 / VKM B-1763) (Desulfovibrio salexigens), this protein is Tryptophan synthase alpha chain.